A 199-amino-acid polypeptide reads, in one-letter code: NAD(P)H-quinone oxidoreductase chain 6 (199 aa).

A run of 5 helical transmembrane segments spans residues 9-29 (IVSF…VVLL), 32-52 (VVYS…LYLL), 61-81 (AQVL…IMLV), 102-122 (LVCA…PWAI), and 143-163 (FLLP…GAIV).

Belongs to the complex I subunit 6 family.

The protein resides in the membrane. The catalysed reaction is a plastoquinone + NADH + (n+1) H(+)(in) = a plastoquinol + NAD(+) + n H(+)(out). The enzyme catalyses a plastoquinone + NADPH + (n+1) H(+)(in) = a plastoquinol + NADP(+) + n H(+)(out). NDH-1 shuttles electrons from NAD(P)H, via FMN and iron-sulfur (Fe-S) centers, to quinones in the respiratory chain. The immediate electron acceptor for the enzyme in this species is believed to be plastoquinone. Couples the redox reaction to proton translocation (for every two electrons transferred, four hydrogen ions are translocated across the cytoplasmic membrane), and thus conserves the redox energy in a proton gradient. In Leptolyngbya boryana (Plectonema boryanum), this protein is NAD(P)H-quinone oxidoreductase chain 6 (ndhG).